The sequence spans 346 residues: MALMKTKFNLKRRVKLAQGLWLMNWCCVLAGIALFSMGVFLKIELRKRSEVMDNDESHFVPNSLILMGSLACALNAFPGKICYDSLDPTKFPRWKPMLKPYLIICLIFNIFIFFTGVVCFLTRGSLESTLAHGLKNGMRYYKDTDIPGRCFLKKTIDLLQIEFKCCGNNGFRDWFELQWVSNRYLGGRSKEVKDRIQSNVDGKYLIDGVPFSCCNPSSPRPCIQLQVTNNSAHYSYDHQTEELNLWSKGCKEALLNYYTSMMSSMGGMVFLVWIMEMAVMIGLRFLHTCLETIANPEDPECESEGWILEKSLKDTIKSSWELVKSMGKLNKVETAGGEEAGVATVS.

Residues 1–24 lie on the Cytoplasmic side of the membrane; sequence MALMKTKFNLKRRVKLAQGLWLMN. A helical membrane pass occupies residues 25–43; the sequence is WCCVLAGIALFSMGVFLKI. Topologically, residues 44–61 are lumenal; sequence ELRKRSEVMDNDESHFVP. The helical transmembrane segment at 62–80 threads the bilayer; sequence NSLILMGSLACALNAFPGK. Over 81-99 the chain is Cytoplasmic; it reads ICYDSLDPTKFPRWKPMLK. A helical membrane pass occupies residues 100–123; it reads PYLIICLIFNIFIFFTGVVCFLTR. Residues 124-264 are Lumenal-facing; it reads GSLESTLAHG…LNYYTSMMSS (141 aa). N229 is a glycosylation site (N-linked (GlcNAc...) asparagine). Residues 265–290 traverse the membrane as a helical segment; that stretch reads MGGMVFLVWIMEMAVMIGLRFLHTCL. At 291–346 the chain is on the cytoplasmic side; it reads ETIANPEDPECESEGWILEKSLKDTIKSSWELVKSMGKLNKVETAGGEEAGVATVS.

It belongs to the PRPH2/ROM1 family. As to quaternary structure, homodimer; disulfide-linked. Found in both rod and cone photoreceptors. Specifically in the rims and incisures of rod and cone outer segment disks.

Its subcellular location is the membrane. May be involved in the morphogenesis of retina outer segment disks and the development and maintenance of the retina ultrastructure. The polypeptide is Peripherin-2 (prph2) (Xenopus laevis (African clawed frog)).